The chain runs to 331 residues: Nacrein-like protein P1 (331 aa).

One can recognise an Alpha-carbonic anhydrase domain in the interval 1 to 331 (QSPINIVSYD…LHALRNVEGY (331 aa)). Residues His-69, His-71, and His-94 each coordinate Zn(2+). A disordered region spans residues 138 to 240 (DEPDDEECKR…GENGHKHGCR (103 aa)). Over residues 144-156 (ECKRILKGHHPDN) the composition is skewed to basic and acidic residues. Positions 157-232 (NENGNGDNGN…NNGENGNNGE (76 aa)) are enriched in low complexity. 24 consecutive repeat copies span residues 162–164 (GDN), 165–167 (GNN), 168–170 (GYN), 171–173 (GDN), 174–176 (GNN), 177–179 (GDN), 180–182 (GNN), 183–185 (GYN), 186–188 (GDN), 189–191 (GNN), 192–194 (GDN), 195–197 (GNN), 198–200 (GYN), 201–203 (GDN), 204–206 (GNN), 207–209 (GDN), 210–212 (GNN), 213–215 (GEN), 216–218 (GNN), 219–221 (GEN), 222–224 (GNN), 225–227 (GEN), 228–229 (GN), and 231–233 (GEN). Residues 162–233 (GDNGNNGYNG…NGENGNNGEN (72 aa)) form a 24 X 3 AA approximate tandem repeats of G-X-N region. 298–299 (TT) contacts substrate.

This sequence belongs to the alpha-carbonic anhydrase family. Homooligomer; disulfide-linked. May also be disulfide-linked to insoluble organic matrix. The cofactor is Zn(2+). In terms of tissue distribution, expressed in the mantle.

Its subcellular location is the secreted. It is found in the extracellular space. The protein localises to the extracellular matrix. It carries out the reaction hydrogencarbonate + H(+) = CO2 + H2O. Its function is as follows. Acts as a negative regulator for calcification in the shells of mollusks. May function both as a calcium concentrator and as a carbonic anhydrase required for production of carbonate ions, which are assembled to CaCO(3) at mineralization sites. Is important for shell formation in both the calcitic prismatic layer and the aragonitic nacreous layer. Shows inhibitory activity of crystal formation when present in free state but, when attached to the insoluble matrix, may regulate the form and size of aragonite crystal. In Mizuhopecten yessoensis (Japanese scallop), this protein is Nacrein-like protein P1.